Here is a 452-residue protein sequence, read N- to C-terminus: Photoreceptor ankyrin repeat protein (452 aa).

4 ANK repeats span residues 94 to 123 (CRLG…SPEE), 130 to 160 (NGRT…DVNQ), 164 to 193 (GGDT…GLDL), and 223 to 257 (RGKT…QLSQ). Disordered regions lie at residues 335–369 (LGTR…SPWV) and 405–427 (SKAS…QSLA). The segment covering 349–362 (APPPPLVPQSPPGS) has biased composition (pro residues). Residues 406–424 (KASSSSHQCQPKPSPSGHQ) are compositionally biased toward polar residues.

It localises to the cytoplasm. It is found in the cytosol. The protein localises to the nucleus. In terms of biological role, acts as a transcriptional repressor for CRX-activated photoreceptor gene regulation. This Homo sapiens (Human) protein is Photoreceptor ankyrin repeat protein.